The primary structure comprises 344 residues: MIELKNIGKQFEVNGKKIIALDNVNLVVPKGTICGVIGASGAGKSTLIRCVNLLERPTVGNVIVDGQDLTTLSSQELISARRSIAMIFQHFNLLSSQTVFENVALPLRLSNTPTEHITKKVNELLELVGLTERKDVYPSNLSGGQKQRVAIARALASDPKVLLCDEATSALDPVTTQSILQLLKEINKRLGLTILLITHEMDVVKRICDRVAVIDQGKLIETGSVSEIFANPTTQLAQQFIQSTFHVELPTEYTEQFSSQPTLNSKPIIKFEFTGNSVDAPVLSMASKKFGIDFSILMSQIDYAGGVKFGFVIAEVEGDGEAITAAKCYLINNNVKVEVLGYVG.

An ABC transporter domain is found at 2 to 241 (IELKNIGKQF…PTTQLAQQFI (240 aa)). 38–45 (GASGAGKS) contacts ATP.

This sequence belongs to the ABC transporter superfamily. Methionine importer (TC 3.A.1.24) family. The complex is composed of two ATP-binding proteins (MetN), two transmembrane proteins (MetI) and a solute-binding protein (MetQ).

The protein resides in the cell inner membrane. It catalyses the reaction L-methionine(out) + ATP + H2O = L-methionine(in) + ADP + phosphate + H(+). The catalysed reaction is D-methionine(out) + ATP + H2O = D-methionine(in) + ADP + phosphate + H(+). Part of the ABC transporter complex MetNIQ involved in methionine import. Responsible for energy coupling to the transport system. The protein is Methionine import ATP-binding protein MetN of Haemophilus ducreyi (strain 35000HP / ATCC 700724).